A 491-amino-acid chain; its full sequence is Probable ribonuclease FAU-1 (491 aa).

Belongs to the FAU-1 family.

Its function is as follows. Probable RNase involved in rRNA stability through maturation and/or degradation of precursor rRNAs. Binds to RNA in loop regions with AU-rich sequences. The protein is Probable ribonuclease FAU-1 of Thermofilum pendens (strain DSM 2475 / Hrk 5).